A 156-amino-acid polypeptide reads, in one-letter code: Large ribosomal subunit protein uL15 (156 aa).

Residues 1–16 (MVRRFKRAVKYRRGSR) are compositionally biased toward basic residues. The tract at residues 1–35 (MVRRFKRAVKYRRGSRTHGWGRVGQHRKSGGSGGK) is disordered.

Belongs to the universal ribosomal protein uL15 family. Part of the 50S ribosomal subunit.

Binds to the 23S rRNA. In Pyrobaculum neutrophilum (strain DSM 2338 / JCM 9278 / NBRC 100436 / V24Sta) (Thermoproteus neutrophilus), this protein is Large ribosomal subunit protein uL15.